Here is a 644-residue protein sequence, read N- to C-terminus: Threonine--tRNA ligase (644 aa).

The region spanning 1 to 61 is the TGS domain; it reads MPDIQLPDGS…DQDAEVAIVT (61 aa). The tract at residues 242–535 is catalytic; the sequence is DHRRIGTELE…LIEHYEGKFP (294 aa). Cys-335, His-386, and His-512 together coordinate Zn(2+).

The protein belongs to the class-II aminoacyl-tRNA synthetase family. Homodimer. The cofactor is Zn(2+).

The protein localises to the cytoplasm. The enzyme catalyses tRNA(Thr) + L-threonine + ATP = L-threonyl-tRNA(Thr) + AMP + diphosphate + H(+). Functionally, catalyzes the attachment of threonine to tRNA(Thr) in a two-step reaction: L-threonine is first activated by ATP to form Thr-AMP and then transferred to the acceptor end of tRNA(Thr). Also edits incorrectly charged L-seryl-tRNA(Thr). In Acidithiobacillus ferrooxidans (strain ATCC 23270 / DSM 14882 / CIP 104768 / NCIMB 8455) (Ferrobacillus ferrooxidans (strain ATCC 23270)), this protein is Threonine--tRNA ligase.